Consider the following 82-residue polypeptide: RNA-binding protein Hfq (82 aa).

One can recognise a Sm domain in the interval 11–71 (DTFLNHVRKT…ISTIMPGAPI (61 aa)).

This sequence belongs to the Hfq family. As to quaternary structure, homohexamer.

Functionally, RNA chaperone that binds small regulatory RNA (sRNAs) and mRNAs to facilitate mRNA translational regulation in response to envelope stress, environmental stress and changes in metabolite concentrations. Also binds with high specificity to tRNAs. The polypeptide is RNA-binding protein Hfq (Rhodopseudomonas palustris (strain HaA2)).